The following is a 177-amino-acid chain: Large ribosomal subunit protein uL6 (177 aa).

The protein belongs to the universal ribosomal protein uL6 family. Part of the 50S ribosomal subunit.

In terms of biological role, this protein binds to the 23S rRNA, and is important in its secondary structure. It is located near the subunit interface in the base of the L7/L12 stalk, and near the tRNA binding site of the peptidyltransferase center. The protein is Large ribosomal subunit protein uL6 of Variovorax paradoxus (strain S110).